Consider the following 296-residue polypeptide: Protoheme IX farnesyltransferase (296 aa).

The Cytoplasmic portion of the chain corresponds to 1-9 (MMFKQYLQV). The helical transmembrane segment at 10–28 (TKPGIIFGNLISVIGGFLL) threads the bilayer. At 29–37 (ASKGSIDYP) the chain is on the periplasmic side. The chain crosses the membrane as a helical span at residues 38 to 56 (LFIYTLVGVSLVVASGCVF). Residues 57–78 (NNYIDRDIDRKMERTKNRVLVK) lie on the Cytoplasmic side of the membrane. The helical transmembrane segment at 79–97 (GLISPGVSLVYATLLGIAG) threads the bilayer. The Periplasmic segment spans residues 98–107 (FMLLWFGANP). Residues 108–126 (LACWLGVMGFVVYVGVYSL) traverse the membrane as a helical segment. Residues 127–197 (YMKRHSVYGT…YQAANIPVLP (71 aa)) are Cytoplasmic-facing. A helical membrane pass occupies residues 198–216 (VIKGISVAKNHITLYIIAF). Residues 217–228 (AVATLMLTLGGY) lie on the Periplasmic side of the membrane. Residues 229-247 (AGYKYLVVAAAVSVWWLGM) traverse the membrane as a helical segment. Over 248-268 (ALRGYKVEDDKVWARKLFGFS) the chain is Cytoplasmic. The chain crosses the membrane as a helical span at residues 269-287 (IIAITALSIMMSVDFMVPN). Residues 288–296 (SQNLLTYVW) lie on the Periplasmic side of the membrane.

This sequence belongs to the UbiA prenyltransferase family. Protoheme IX farnesyltransferase subfamily.

It localises to the cell inner membrane. The enzyme catalyses heme b + (2E,6E)-farnesyl diphosphate + H2O = Fe(II)-heme o + diphosphate. The protein operates within porphyrin-containing compound metabolism; heme O biosynthesis; heme O from protoheme: step 1/1. Its function is as follows. Converts heme B (protoheme IX) to heme O by substitution of the vinyl group on carbon 2 of heme B porphyrin ring with a hydroxyethyl farnesyl side group. The polypeptide is Protoheme IX farnesyltransferase (Salmonella typhi).